The primary structure comprises 77 residues: Small nuclear ribonucleoprotein G (77 aa).

A Sm domain is found at 4–76 (AGAPDLKKYL…VIMIETLDKM (73 aa)).

This sequence belongs to the snRNP Sm proteins family. Belongs to the 40S cdc5-associated complex (or cwf complex), a spliceosome sub-complex reminiscent of a late-stage spliceosome composed of the U2, U5 and U6 snRNAs and at least brr2, cdc5, cwf2/prp3, cwf3/syf1, cwf4/syf3, cwf5/ecm2, spp42/cwf6, cwf7/spf27, cwf8, cwf9, cwf10, cwf11, cwf12, prp45/cwf13, cwf14, cwf15, cwf16, cwf17, cwf18, cwf19, cwf20, cwf21, cwf22, cwf23, cwf24, cwf25, cwf26, cyp7/cwf27, cwf28, cwf29/ist3, lea1, msl1, prp5/cwf1, prp10, prp12/sap130, prp17, prp22, sap61, sap62, sap114, sap145, slu7, smb1, smd1, smd3, smf1, smg1 and syf2.

The protein localises to the nucleus. Its subcellular location is the cytoplasm. Its function is as follows. Plays a role in pre-mRNA splicing as a core component of the spliceosomal U1, U2, U4 and U5 small nuclear ribonucleoproteins (snRNPs), the building blocks of the spliceosome. The protein is Small nuclear ribonucleoprotein G (smg1) of Schizosaccharomyces pombe (strain 972 / ATCC 24843) (Fission yeast).